The primary structure comprises 572 residues: Probable terpene synthase 11 (572 aa).

3 residues coordinate Mg(2+): aspartate 317, aspartate 321, and glutamate 469. The short motif at 317-321 is the DDXXD motif element; it reads DDIFD.

The protein belongs to the terpene synthase family. Requires Mg(2+) as cofactor.

Its function is as follows. Probable sesquiterpene synthase. The sequence is that of Probable terpene synthase 11 (TPS11) from Ricinus communis (Castor bean).